The following is a 615-amino-acid chain: Chaperone protein DnaK (615 aa).

T174 carries the phosphothreonine; by autocatalysis modification. Residues 581–615 (QAAPKDGAEGDAKSADDNTVDGDFEEVDPNKDDKK) form a disordered region. A compositionally biased stretch (basic and acidic residues) spans 586–596 (DGAEGDAKSAD). Residues 598–607 (NTVDGDFEEV) show a composition bias toward acidic residues.

Belongs to the heat shock protein 70 family.

Its function is as follows. Acts as a chaperone. The chain is Chaperone protein DnaK from Leuconostoc mesenteroides subsp. mesenteroides (strain ATCC 8293 / DSM 20343 / BCRC 11652 / CCM 1803 / JCM 6124 / NCDO 523 / NBRC 100496 / NCIMB 8023 / NCTC 12954 / NRRL B-1118 / 37Y).